A 197-amino-acid chain; its full sequence is Pyridoxal 5'-phosphate synthase subunit PdxT (197 aa).

Position 52-54 (52-54 (GES)) interacts with L-glutamine. Residue Cys83 is the Nucleophile of the active site. L-glutamine contacts are provided by residues Arg115 and 142-143 (IR). Active-site charge relay system residues include His178 and Glu180.

Belongs to the glutaminase PdxT/SNO family. In terms of assembly, in the presence of PdxS, forms a dodecamer of heterodimers. Only shows activity in the heterodimer.

The catalysed reaction is aldehydo-D-ribose 5-phosphate + D-glyceraldehyde 3-phosphate + L-glutamine = pyridoxal 5'-phosphate + L-glutamate + phosphate + 3 H2O + H(+). It catalyses the reaction L-glutamine + H2O = L-glutamate + NH4(+). Its pathway is cofactor biosynthesis; pyridoxal 5'-phosphate biosynthesis. Its function is as follows. Catalyzes the hydrolysis of glutamine to glutamate and ammonia as part of the biosynthesis of pyridoxal 5'-phosphate. The resulting ammonia molecule is channeled to the active site of PdxS. The chain is Pyridoxal 5'-phosphate synthase subunit PdxT from Korarchaeum cryptofilum (strain OPF8).